The sequence spans 752 residues: Multifunctional tryptophan biosynthesis protein (752 aa).

One can recognise a Glutamine amidotransferase type-1 domain in the interval 3–202; sequence FTLLIDNYDS…IQMKGGKWGG (200 aa). Residue 58-60 participates in L-glutamine binding; that stretch reads GPG. The active-site Nucleophile; for GATase activity is the C86. Position 136-137 (136-137) interacts with L-glutamine; the sequence is SL. Catalysis depends on for GATase activity residues H176 and E178. An indole-3-glycerol phosphate synthase region spans residues 231–495; sequence ILNKIHAQRL…DTKAFLRSLI (265 aa). The N-(5'-phosphoribosyl)anthranilate isomerase stretch occupies residues 509–752; the sequence is LVKICGIRST…VEAFVKAVRG (244 aa).

It carries out the reaction N-(5-phospho-beta-D-ribosyl)anthranilate = 1-(2-carboxyphenylamino)-1-deoxy-D-ribulose 5-phosphate. The catalysed reaction is 1-(2-carboxyphenylamino)-1-deoxy-D-ribulose 5-phosphate + H(+) = (1S,2R)-1-C-(indol-3-yl)glycerol 3-phosphate + CO2 + H2O. It catalyses the reaction chorismate + L-glutamine = anthranilate + pyruvate + L-glutamate + H(+). It participates in amino-acid biosynthesis; L-tryptophan biosynthesis; L-tryptophan from chorismate: step 1/5. It functions in the pathway amino-acid biosynthesis; L-tryptophan biosynthesis; L-tryptophan from chorismate: step 3/5. Its pathway is amino-acid biosynthesis; L-tryptophan biosynthesis; L-tryptophan from chorismate: step 4/5. In terms of biological role, trifunctional enzyme bearing the Gln amidotransferase (GATase) domain of anthranilate synthase, indole-glycerolphosphate synthase, and phosphoribosylanthranilate isomerase activities. This chain is Multifunctional tryptophan biosynthesis protein (TRP1), found in Cryptococcus neoformans var. grubii serotype A (strain H99 / ATCC 208821 / CBS 10515 / FGSC 9487) (Filobasidiella neoformans var. grubii).